Reading from the N-terminus, the 417-residue chain is Tyrosine--tRNA ligase (417 aa).

Tyr39 is a binding site for L-tyrosine. The short motif at Pro44 to Ser53 is the 'HIGH' region element. L-tyrosine-binding residues include Tyr176 and Gln180. Residues Lys236–Ser240 carry the 'KMSKS' region motif. ATP is bound at residue Lys239. Positions Thr350 to Leu417 constitute an S4 RNA-binding domain.

It belongs to the class-I aminoacyl-tRNA synthetase family. TyrS type 1 subfamily. As to quaternary structure, homodimer.

It is found in the cytoplasm. The catalysed reaction is tRNA(Tyr) + L-tyrosine + ATP = L-tyrosyl-tRNA(Tyr) + AMP + diphosphate + H(+). Its function is as follows. Catalyzes the attachment of tyrosine to tRNA(Tyr) in a two-step reaction: tyrosine is first activated by ATP to form Tyr-AMP and then transferred to the acceptor end of tRNA(Tyr). This Bartonella henselae (strain ATCC 49882 / DSM 28221 / CCUG 30454 / Houston 1) (Rochalimaea henselae) protein is Tyrosine--tRNA ligase.